The primary structure comprises 412 residues: Histone-lysine N-methyltransferase SUV39H1 (412 aa).

Residues 1-89 (MAENLKGCSV…LKCIRVLKQF (89 aa)) form an interaction with SIRT1 region. Residues 43–101 (FEVEYLCDYKKIREQEYYLVKWRGYPDSENTWEPRQNLKCIRVLKQFHKDLERELVRRH) enclose the Chromo domain. A Pre-SET domain is found at 179 to 240 (VGCECQDCLL…DCPNRVVQKG (62 aa)). Zn(2+) contacts are provided by C181, C183, C186, C194, C195, C222, C226, C228, and C232. In terms of domain architecture, SET spans 243 to 366 (YDLCIFRTND…AGEELTFDYN (124 aa)). Position 254–256 (254–256 (RGW)) interacts with S-adenosyl-L-methionine. A mediates interaction with MECOM region spans residues 255–377 (GWGVRTLEKI…QVDPVDMEST (123 aa)). K266 is subject to N6-acetyllysine. S-adenosyl-L-methionine is bound by residues Y297 and 323–324 (NH). C326 lines the Zn(2+) pocket. Residue S391 is modified to Phosphoserine. Residues 396-412 (VRIECKCGTTACRKYLF) form the Post-SET domain. Zn(2+)-binding residues include C400, C402, and C407.

It belongs to the class V-like SAM-binding methyltransferase superfamily. Histone-lysine methyltransferase family. Suvar3-9 subfamily. In terms of assembly, interacts with CCAR2 and GFI1B. Component of the eNoSC complex, composed of SIRT1, SUV39H1 and RRP8. Interacts with H3 and H4 histones. Interacts with DNMT3B, CBX1, CBX4, MBD1, RUNX1, RUNX3, MYOD1, SMAD5 and RB1. Interacts with SBF1 through the SET domain. Interacts with HDAC1 and HDAC2 through the N-terminus and associates with the core histone deacetylase complex composed of HDAC1, HDAC2, RBBP4 and RBBP7. Interacts (via SET domain) with MECOM; enhances MECOM transcriptional repression activity. Interacts with LMNA; the interaction increases stability of SUV39H1. The large PER complex involved in the histone methylation is composed of at least PER2, CBX3, TRIM28, SUV39H1 and/or SUV39H2; CBX3 mediates the formation of the complex. In terms of processing, phosphorylated on serine residues, and to a lesser degree, on threonine residues. Acetylated at Lys-266, leading to inhibition of enzyme activity. SIRT1-mediated deacetylation relieves this inhibition. Post-translationally, ubiquitinated by the DCX(DCAF13) E3 ubiquitin ligase complex, leading to its degradation. As to expression, widely expressed.

The protein resides in the nucleus. Its subcellular location is the nucleus lamina. It is found in the nucleoplasm. It localises to the chromosome. The protein localises to the centromere. The enzyme catalyses L-lysyl(9)-[histone H3] + 3 S-adenosyl-L-methionine = N(6),N(6),N(6)-trimethyl-L-lysyl(9)-[histone H3] + 3 S-adenosyl-L-homocysteine + 3 H(+). Negatively regulated by CCAR2. Histone methyltransferase that specifically trimethylates 'Lys-9' of histone H3 using monomethylated H3 'Lys-9' as substrate. H3 'Lys-9' trimethylation represents a specific tag for epigenetic transcriptional repression by recruiting HP1 (CBX1, CBX3 and/or CBX5) proteins to methylated histones. Mainly functions in heterochromatin regions, thereby playing a central role in the establishment of constitutive heterochromatin at pericentric and telomere regions. H3 'Lys-9' trimethylation is also required to direct DNA methylation at pericentric repeats. SUV39H1 is targeted to histone H3 via its interaction with RB1 and is involved in many processes, such as repression of MYOD1-stimulated differentiation, regulation of the control switch for exiting the cell cycle and entering differentiation, repression by the PML-RARA fusion protein, BMP-induced repression, repression of switch recombination to IgA and regulation of telomere length. Component of the eNoSC (energy-dependent nucleolar silencing) complex, a complex that mediates silencing of rDNA in response to intracellular energy status and acts by recruiting histone-modifying enzymes. The eNoSC complex is able to sense the energy status of cell: upon glucose starvation, elevation of NAD(+)/NADP(+) ratio activates SIRT1, leading to histone H3 deacetylation followed by dimethylation of H3 at 'Lys-9' (H3K9me2) by SUV39H1 and the formation of silent chromatin in the rDNA locus. Recruited by the PER complex to the E-box elements of the circadian target genes such as PER2 itself or PER1, contributes to the conversion of local chromatin to a heterochromatin-like repressive state through H3 'Lys-9' trimethylation. The protein is Histone-lysine N-methyltransferase SUV39H1 (Suv39h1) of Mus musculus (Mouse).